We begin with the raw amino-acid sequence, 769 residues long: Metal transporter CNNM4 (769 aa).

Residues 1–175 (MAASAGCYYG…RLRVLEEEKP (175 aa)) are Extracellular-facing. N-linked (GlcNAc...) asparagine glycans are attached at residues Asn-99 and Asn-115. Positions 175-355 (PLLPIWLQAC…EPYSGIVREE (181 aa)) constitute a CNNM transmembrane domain. The chain crosses the membrane as a helical span at residues 176-196 (LLPIWLQACIIAVLLTLSGIF). At 197–237 (SGLNLGLMALDPMELRVVQRCGTEKEKRYASKIEPVRRKGN) the chain is on the cytoplasmic side. An intramembrane region (helical) is located at residues 238 to 258 (YLLCSLLLGNVLVNTTLTALL). The Cytoplasmic portion of the chain corresponds to 259 to 261 (DEL). Residues 262–282 (IGSGLAAVLASTTGIVVLGEI) traverse the membrane as a helical segment. Over 283 to 292 (VPQALCSRHG) the chain is Extracellular. Residues 293-313 (LAVGANTLWLTRIFMLLTFPV) traverse the membrane as a helical segment. At 314 to 769 (AYPVSRLLDC…SQHSLQHNAV (456 aa)) the chain is on the cytoplasmic side. CBS domains follow at residues 374 to 435 (MTKV…CTPL) and 442 to 508 (YSHP…ILDE). The segment at 717-769 (LMSSRLDSSPQSPEGGTRKPDSTLSERSEVLEDETTSLLNQRNSQHSLQHNAV) is disordered. Over residues 721-730 (RLDSSPQSPE) the composition is skewed to polar residues. Over residues 732-746 (GTRKPDSTLSERSEV) the composition is skewed to basic and acidic residues. Over residues 752 to 769 (TSLLNQRNSQHSLQHNAV) the composition is skewed to polar residues.

Belongs to the ACDP family.

Its subcellular location is the cell membrane. Probable metal transporter. In Xenopus tropicalis (Western clawed frog), this protein is Metal transporter CNNM4 (cnnm4).